We begin with the raw amino-acid sequence, 439 residues long: AP-2 complex subunit mu (439 aa).

The 267-residue stretch at 172-438 folds into the MHD domain; it reads RNELYIDVVE…LTKAGTYQNR (267 aa).

The protein belongs to the adaptor complexes medium subunit family. Adaptor protein complex 2 (AP-2) is a heterotetramer composed of two large adaptins (alpha-type and beta-type subunits), a medium adaptin (mu-type subunit AP50) and a small adaptin (sigma-type subunit AP17). Phosphorylated.

It localises to the cell membrane. The protein localises to the membrane. It is found in the coated pit. Its function is as follows. Component of the adaptor complexes which link clathrin to receptors in coated vesicles. Clathrin-associated protein complexes are believed to interact with the cytoplasmic tails of membrane proteins, leading to their selection and concentration. AP50 is a subunit of the plasma membrane adaptor. The chain is AP-2 complex subunit mu (apm2) from Dictyostelium discoideum (Social amoeba).